The primary structure comprises 301 residues: uncharacterized protein (301 aa).

Over residues 16–28 the composition is skewed to basic and acidic residues; it reads EITEESEKTKTDL. The interval 16–38 is disordered; that stretch reads EITEESEKTKTDLQKANTPNKTE. Polar residues predominate over residues 29-38; sequence QKANTPNKTE. Positions 252 to 301 constitute a G-patch domain; sequence KENVALKMLQRCGWKEGQGLGQHNQGIINPLHVEISGFVTETKHSKINDK.

This is an uncharacterized protein from Schizosaccharomyces pombe (strain 972 / ATCC 24843) (Fission yeast).